We begin with the raw amino-acid sequence, 325 residues long: Ferrochelatase (325 aa).

Residues H172 and E267 each coordinate Fe cation.

This sequence belongs to the ferrochelatase family.

It localises to the cytoplasm. The enzyme catalyses heme b + 2 H(+) = protoporphyrin IX + Fe(2+). Its pathway is porphyrin-containing compound metabolism; protoheme biosynthesis; protoheme from protoporphyrin-IX: step 1/1. Functionally, catalyzes the ferrous insertion into protoporphyrin IX. This Acidobacterium capsulatum (strain ATCC 51196 / DSM 11244 / BCRC 80197 / JCM 7670 / NBRC 15755 / NCIMB 13165 / 161) protein is Ferrochelatase.